The following is a 392-amino-acid chain: Phosphopentomutase (392 aa).

Residues Asp10, Asp282, His287, Asp323, His324, and His335 each coordinate Mn(2+).

The protein belongs to the phosphopentomutase family. The cofactor is Mn(2+).

The protein localises to the cytoplasm. The enzyme catalyses 2-deoxy-alpha-D-ribose 1-phosphate = 2-deoxy-D-ribose 5-phosphate. The catalysed reaction is alpha-D-ribose 1-phosphate = D-ribose 5-phosphate. It participates in carbohydrate degradation; 2-deoxy-D-ribose 1-phosphate degradation; D-glyceraldehyde 3-phosphate and acetaldehyde from 2-deoxy-alpha-D-ribose 1-phosphate: step 1/2. In terms of biological role, isomerase that catalyzes the conversion of deoxy-ribose 1-phosphate (dRib-1-P) and ribose 1-phosphate (Rib-1-P) to deoxy-ribose 5-phosphate (dRib-5-P) and ribose 5-phosphate (Rib-5-P), respectively. This Dictyoglomus thermophilum (strain ATCC 35947 / DSM 3960 / H-6-12) protein is Phosphopentomutase.